The chain runs to 259 residues: MLPLCLVAALLLSASGPRPSLGDEAIHCPPCSEEKLARCRPPVGCEELVREPGCGCCATCALGKGMPCGVYTPRCGSGLRCYPPRGVEKPLHTLMHGQGLCMELAEIEAIQESLQPSDKDEGDHPNNSFSPCSPQDRRCLQKHLAKIRDRSTSGGKMKVIGAPREEARPVPQGSCQSELHRALERLAASQRRTHEDLYIIPIPNCDRNGNFHPKQCHPALDGQRGKCWCVDRKTGVKLPGGLEPKGELDCHQLADSFRE.

A signal peptide spans 1–22 (MLPLCLVAALLLSASGPRPSLG). The IGFBP N-terminal domain maps to 24 to 104 (EAIHCPPCSE…MHGQGLCMEL (81 aa)). 6 disulfide bridges follow: C28-C54, C31-C56, C39-C57, C45-C60, C68-C81, and C75-C101. A disordered region spans residues 115 to 136 (QPSDKDEGDHPNNSFSPCSPQD). The N-linked (GlcNAc...) asparagine glycan is linked to N126. Cystine bridges form between C132-C139, C175-C205, C216-C227, and C229-C250. A Thyroglobulin type-1 domain is found at 172-250 (QGSCQSELHR…GLEPKGELDC (79 aa)). S256 carries the phosphoserine modification.

As to quaternary structure, binds IGF2 more than IGF1.

The protein resides in the secreted. Its function is as follows. IGF-binding proteins prolong the half-life of the IGFs and have been shown to either inhibit or stimulate the growth promoting effects of the IGFs on cell culture. They alter the interaction of IGFs with their cell surface receptors. This Sus scrofa (Pig) protein is Insulin-like growth factor-binding protein 4 (IGFBP4).